The primary structure comprises 354 residues: UDP-3-O-acylglucosamine N-acyltransferase (354 aa).

Residue H247 is the Proton acceptor of the active site.

Belongs to the transferase hexapeptide repeat family. LpxD subfamily. In terms of assembly, homotrimer.

It catalyses the reaction a UDP-3-O-[(3R)-3-hydroxyacyl]-alpha-D-glucosamine + a (3R)-hydroxyacyl-[ACP] = a UDP-2-N,3-O-bis[(3R)-3-hydroxyacyl]-alpha-D-glucosamine + holo-[ACP] + H(+). Its pathway is bacterial outer membrane biogenesis; LPS lipid A biosynthesis. In terms of biological role, catalyzes the N-acylation of UDP-3-O-acylglucosamine using 3-hydroxyacyl-ACP as the acyl donor. Is involved in the biosynthesis of lipid A, a phosphorylated glycolipid that anchors the lipopolysaccharide to the outer membrane of the cell. In Chlamydia trachomatis serovar A (strain ATCC VR-571B / DSM 19440 / HAR-13), this protein is UDP-3-O-acylglucosamine N-acyltransferase.